Reading from the N-terminus, the 157-residue chain is Small ribosomal subunit protein uS7 (157 aa).

It belongs to the universal ribosomal protein uS7 family. As to quaternary structure, part of the 30S ribosomal subunit. Contacts proteins S9 and S11.

In terms of biological role, one of the primary rRNA binding proteins, it binds directly to 16S rRNA where it nucleates assembly of the head domain of the 30S subunit. Is located at the subunit interface close to the decoding center, probably blocks exit of the E-site tRNA. This is Small ribosomal subunit protein uS7 from Bdellovibrio bacteriovorus (strain ATCC 15356 / DSM 50701 / NCIMB 9529 / HD100).